Here is a 372-residue protein sequence, read N- to C-terminus: tRNA-specific 2-thiouridylase MnmA (372 aa).

Residues 17–24 (GMSGGVDS) and M43 contribute to the ATP site. Residues 103–105 (NPD) form an interaction with target base in tRNA region. C108 acts as the Nucleophile in catalysis. A disulfide bridge links C108 with C205. G133 provides a ligand contact to ATP. Positions 155-157 (KDQ) are interaction with tRNA. The Cysteine persulfide intermediate role is filled by C205. The interaction with tRNA stretch occupies residues 317–318 (RY).

It belongs to the MnmA/TRMU family.

It localises to the cytoplasm. The catalysed reaction is S-sulfanyl-L-cysteinyl-[protein] + uridine(34) in tRNA + AH2 + ATP = 2-thiouridine(34) in tRNA + L-cysteinyl-[protein] + A + AMP + diphosphate + H(+). Functionally, catalyzes the 2-thiolation of uridine at the wobble position (U34) of tRNA, leading to the formation of s(2)U34. In Shewanella sediminis (strain HAW-EB3), this protein is tRNA-specific 2-thiouridylase MnmA.